The primary structure comprises 405 residues: Probable tRNA sulfurtransferase (405 aa).

In terms of domain architecture, THUMP spans 60–165 (DKIDQRLKLV…QDAIYISNQL (106 aa)). ATP is bound by residues 183 to 184 (ML), 208 to 209 (HF), R265, G287, and Q296.

Belongs to the ThiI family.

The protein localises to the cytoplasm. The enzyme catalyses [ThiI sulfur-carrier protein]-S-sulfanyl-L-cysteine + a uridine in tRNA + 2 reduced [2Fe-2S]-[ferredoxin] + ATP + H(+) = [ThiI sulfur-carrier protein]-L-cysteine + a 4-thiouridine in tRNA + 2 oxidized [2Fe-2S]-[ferredoxin] + AMP + diphosphate. The catalysed reaction is [ThiS sulfur-carrier protein]-C-terminal Gly-Gly-AMP + S-sulfanyl-L-cysteinyl-[cysteine desulfurase] + AH2 = [ThiS sulfur-carrier protein]-C-terminal-Gly-aminoethanethioate + L-cysteinyl-[cysteine desulfurase] + A + AMP + 2 H(+). Its pathway is cofactor biosynthesis; thiamine diphosphate biosynthesis. In terms of biological role, catalyzes the ATP-dependent transfer of a sulfur to tRNA to produce 4-thiouridine in position 8 of tRNAs, which functions as a near-UV photosensor. Also catalyzes the transfer of sulfur to the sulfur carrier protein ThiS, forming ThiS-thiocarboxylate. This is a step in the synthesis of thiazole, in the thiamine biosynthesis pathway. The sulfur is donated as persulfide by IscS. This Lactobacillus gasseri (strain ATCC 33323 / DSM 20243 / BCRC 14619 / CIP 102991 / JCM 1131 / KCTC 3163 / NCIMB 11718 / NCTC 13722 / AM63) protein is Probable tRNA sulfurtransferase.